A 112-amino-acid polypeptide reads, in one-letter code: cAMP-regulated phosphoprotein 19 (112 aa).

Residue M1 is modified to N-acetylmethionine. A compositionally biased stretch (low complexity) spans 1–11; sequence MSAEVPEAASA. The interval 1-49 is disordered; it reads MSAEVPEAASAEEQKEMEDKVTSPEKAEEAKLKARYPHLGQKPGGSDFL. N-acetylserine is present on S2. A phosphoserine mark is found at S2 and S23. Basic and acidic residues predominate over residues 12-32; that stretch reads EEQKEMEDKVTSPEKAEEAKL. 2 positions are modified to phosphoserine; by GWL: S62 and S104. Residues 73-112 form a disordered region; the sequence is KNKQLPTAAPDKTEVTGDHIPTPQDLPQRKPSLVASKLAG. The residue at position 104 (S104) is a Phosphoserine; by PKA. K109 carries the post-translational modification N6-acetyllysine.

This sequence belongs to the endosulfine family. Interacts (when phosphorylated at Ser-62) with PPP2R2D. Interacts with SNCA. Interacts with PPP2R2A; the interaction is direct and this interaction inhibits PP2A activity. Phosphorylation at Ser-62 by MASTL/GWL during mitosis is essential for interaction with PPP2R2D (PR55-delta) and subsequent inactivation of PP2A. Phosphorylated by PKA.

Its subcellular location is the cytoplasm. Functionally, protein phosphatase inhibitor that specifically inhibits protein phosphatase 2A (PP2A) during mitosis. Inhibition of PP2A is enhanced when ARPP19 is phosphorylated. When phosphorylated at Ser-62 during mitosis, specifically interacts with PPP2R2D (PR55-delta) and inhibits its activity, leading to inactivation of PP2A, an essential condition to keep cyclin-B1-CDK1 activity high during M phase. May indirectly enhance GAP-43 expression. The sequence is that of cAMP-regulated phosphoprotein 19 (ARPP19) from Homo sapiens (Human).